A 183-amino-acid chain; its full sequence is Endoribonuclease AbiQ (183 aa).

It belongs to the ToxN/AbiQ toxin family. In terms of assembly, forms a triangular heterohexamer with a single 35-nt-long repeat of RNA antitoxin AntiQ.

The protein resides in the cytoplasm. In terms of biological role, toxic component of a type III toxin-antitoxin (TA) system. An endoribonuclease that is probably sequence-specific. It is neutralized by its cognate antitoxin RNA AntiQ, which has 2.8 35 nucleotide-long repeats. Cannot be cloned in L.lactis subsp. cremoris strain NZ9000 in the absence of the antitoxin gene; expression in strain NZ9000 even in the presence of antiQ inhibits growth in a bacteriostatic fashion. Confers resistance to 936 and c2 phages but not P335 phages in L.lactis, causes an abortive infection (Abi phenotype). Viral DNA is replicated but not cleaved from its concatemeric form, while the viral major structural protein is produced normally in the presence of this protein. Operon expression in E.coli confers resistance to 3 phages of the Myoviridae family (T4, RB69 and phage 2) and 1 of the Siphoviridae family (T5), but not other tested phages (T1, T3, lambda vir, HK97, Mu and pilH alpha). The presence of this operon in L.lactis subsp. lactis strain IL1403 during phage P008 infection alters the viral transcription profiles. The polypeptide is Endoribonuclease AbiQ (Lactococcus lactis subsp. lactis (Streptococcus lactis)).